The sequence spans 266 residues: GTP cyclohydrolase FolE2 (266 aa).

The protein belongs to the GTP cyclohydrolase IV family.

The catalysed reaction is GTP + H2O = 7,8-dihydroneopterin 3'-triphosphate + formate + H(+). Its pathway is cofactor biosynthesis; 7,8-dihydroneopterin triphosphate biosynthesis; 7,8-dihydroneopterin triphosphate from GTP: step 1/1. Functionally, converts GTP to 7,8-dihydroneopterin triphosphate. This Syntrophotalea carbinolica (strain DSM 2380 / NBRC 103641 / GraBd1) (Pelobacter carbinolicus) protein is GTP cyclohydrolase FolE2.